An 88-amino-acid polypeptide reads, in one-letter code: Translation initiation factor IF-1 3 (88 aa).

The S1-like domain maps to 1-72 (MAKEELLELD…TKGCINFRHK (72 aa)).

The protein belongs to the IF-1 family. In terms of assembly, component of the 30S ribosomal translation pre-initiation complex which assembles on the 30S ribosome in the order IF-2 and IF-3, IF-1 and N-formylmethionyl-tRNA(fMet); mRNA recruitment can occur at any time during PIC assembly.

The protein resides in the cytoplasm. In terms of biological role, one of the essential components for the initiation of protein synthesis. Stabilizes the binding of IF-2 and IF-3 on the 30S subunit to which N-formylmethionyl-tRNA(fMet) subsequently binds. Helps modulate mRNA selection, yielding the 30S pre-initiation complex (PIC). Upon addition of the 50S ribosomal subunit IF-1, IF-2 and IF-3 are released leaving the mature 70S translation initiation complex. The sequence is that of Translation initiation factor IF-1 3 from Burkholderia orbicola (strain AU 1054).